The chain runs to 55 residues: Large ribosomal subunit protein bL33B (55 aa).

Belongs to the bacterial ribosomal protein bL33 family.

In Mycobacteroides abscessus (strain ATCC 19977 / DSM 44196 / CCUG 20993 / CIP 104536 / JCM 13569 / NCTC 13031 / TMC 1543 / L948) (Mycobacterium abscessus), this protein is Large ribosomal subunit protein bL33B.